The chain runs to 274 residues: Small ribosomal subunit protein uS3 (274 aa).

In terms of domain architecture, KH type-2 spans 38 to 106 (IRRLLSSGLE…QVQLNILEVK (69 aa)). The segment at 215–274 (AAAAPAGADRPRRERPSGTRPRRSGASGTTATGTDAGRAAGGEEAAPDAAAPVEAQSTES) is disordered. A compositionally biased stretch (low complexity) spans 238 to 266 (SGASGTTATGTDAGRAAGGEEAAPDAAAP).

Belongs to the universal ribosomal protein uS3 family. As to quaternary structure, part of the 30S ribosomal subunit. Forms a tight complex with proteins S10 and S14.

In terms of biological role, binds the lower part of the 30S subunit head. Binds mRNA in the 70S ribosome, positioning it for translation. This chain is Small ribosomal subunit protein uS3, found in Mycobacterium tuberculosis (strain ATCC 25177 / H37Ra).